A 1921-amino-acid chain; its full sequence is MEASSSGTAELPRSLSRRAPSRATTMMIDRPNEDASAMDSELVPSSLASIAPILRVANEIEKDNPRVAYLCRFHAFEKAHRMDATSSGRGVRQFKTYLLHRLEKEEEETKPQLAKNDPREIQAYYQNFYEKYIKEGETSRKPEEMARLYQIASVLYDVLKTVVPSPKVDYETRRYAEEVERKRDRYEHYNILPLYAVGTKPAIVELPEVKAAFSAVRNVRNLPRRRIHLPSNTPNEMRKARTKLNDILEWLASEFGFQRGNVANQREHIILLLANADIRKRNDEEYDELKPSTVTELMDKTFKSYYSWCKYLHSTSNLKFPDDCDKQQLQLIYISLYLLIWGEASNVRFMPECICYIFHNMANDVYGILFSNVEAVSGETYETEEVIDEESFLRTVITPIYQVIRNEAKRNKGGTASHSQWRNYDDLNEYFWSKKCFKIGWPLDLKADFFLNSDEITPQDERLNQVTYGKSKPKTNFVEVRTFWNLFRDFDRMWIFLVMAFQAMVIVGWHGSGSLGDIFDKDVFKTVLTIFITSAYLTLLQAALDIILNFNAWKNFKFSQILRYLLKFAVAFMWAVLLPIAYSKSVQRPTGVVKFFSTWTGDWKDQSFYTYAVSFYVLPNILAALLFLVPPFRRAMECSDMRPIKVIMWWAQPKLYVGRGMHEDMFSLFKYTTFWIMLLISKLAFNYYVEILPLITPTKMIMNLHIGHYQWHEFFPHATNNIGVVIAIWAPIVLVYLMDTQIWYAIFSTLFGGIHGAFSHLGEIRTLGMLRSRFESIPIAFSRTLMPSEDAKRKHADDYVDQKNITNFSQVWNEFIYSMRSEDKISDRDRDLLLVPSSSGDVSVIQWPPFLLASKIPIAVDMAKDFKGKEDAELFRKIKSDSYMYYAVIESYETLKKIIYALLEDEADRRVMNQVFLEVDMSMQQQRFIYEFRMSGLPLLSDKLEKFLSILLSDYEDQGTYKSQLINVFQDVIEIITQDLLVNGHEILERARVHSPDIKNEKKEQRFEKINIHLVRDRCWREKVIRLHLLLSVKESAINVPQNLEARRRITFFANSLFMNMPSAPRIRDMLSFSVLTPYYKEDVLYSEEDLNKENEDGISILFYLQKIYPDEWTNYLDRLKDPKLPEKDKSEFLREWVSYRGQTLARTVRGMMYYRQALELQCYQEVAGEQAEFSVFRAMASNDENQKAFLERARALADLKFTYVVSCQVYGNQKKSGDIHNRSCYTNILQLMLKYPSLRVAYVDEREETADAKSPKVFYSVLLKGGDKFDEEIYRIKLPGPPAEIGEGKPENQNHAIIFTRGEALQTIDMNQDNYFEEAFKLRNVLEEFNKERVGRRKPTILGLREHIFTGSVSSLAWFMSNQESSFVTIGQRILANPLRVRFHYGHPDIFDRIFHITRGGVSKASKVINLSEDIFGGFNSTLRGGYVTHHEYIQVGKGRDVGLNPISIFEAKVANGNGEQTLSRDVYRLGHRFDFYRMLSFYFTTIGFYFSSMLTVLTVYAFLYGRMYMVMSGLEKEILRLASPNQLEALEQALATQSIFQLGFLMVLPMVMEIGLEHGFRSAIVDFFIMQLQLASVFFTFQLGTKSHYYGRTILHGGSKYRPTGRGFVVFHAKFAENYRLYSRSHFVKGLELLLLLVVYQIYGHSYRSSNLYLYITVSMWFMVGSWLFAPFIFNPSGFEWQKTVDDWTDWKRWLGDRGGIGIPVEKSWESWWNVEQEHLKHTSIRGRILEITLALRFFIYQYGIVYQLNISQRSKSFLVYGLSWVVLLTSLLVLKMVSMGRRRFGTDFQLMFRILKALLFLGFLSVMTILFVVFKLTLTDLSASVLAFLPTGWAILLIGQVLRSPIKALGVWDSVKELGRAYENIMGLVIFAPIAVLSWFPIVSEFQARLLFNQAFSRGLQISMILAGRKDKATSSHK.

A disordered region spans residues 1-23; sequence MEASSSGTAELPRSLSRRAPSRA. The Cytoplasmic portion of the chain corresponds to 1-492; that stretch reads MEASSSGTAE…FWNLFRDFDR (492 aa). The chain crosses the membrane as a helical span at residues 493–513; that stretch reads MWIFLVMAFQAMVIVGWHGSG. Residues 514–526 are Extracellular-facing; the sequence is SLGDIFDKDVFKT. Residues 527-547 form a helical membrane-spanning segment; sequence VLTIFITSAYLTLLQAALDII. Residues 548 to 560 are Cytoplasmic-facing; the sequence is LNFNAWKNFKFSQ. The helical transmembrane segment at 561–581 threads the bilayer; sequence ILRYLLKFAVAFMWAVLLPIA. Over 582–611 the chain is Extracellular; sequence YSKSVQRPTGVVKFFSTWTGDWKDQSFYTY. Residues 612 to 632 form a helical membrane-spanning segment; sequence AVSFYVLPNILAALLFLVPPF. At 633–674 the chain is on the cytoplasmic side; it reads RRAMECSDMRPIKVIMWWAQPKLYVGRGMHEDMFSLFKYTTF. Residues 675-695 form a helical membrane-spanning segment; that stretch reads WIMLLISKLAFNYYVEILPLI. Topologically, residues 696–721 are extracellular; sequence TPTKMIMNLHIGHYQWHEFFPHATNN. A helical transmembrane segment spans residues 722–742; it reads IGVVIAIWAPIVLVYLMDTQI. The Cytoplasmic segment spans residues 743-1484; it reads WYAIFSTLFG…FDFYRMLSFY (742 aa). The helical transmembrane segment at 1485–1505 threads the bilayer; the sequence is FTTIGFYFSSMLTVLTVYAFL. Residues 1506 to 1540 are Extracellular-facing; the sequence is YGRMYMVMSGLEKEILRLASPNQLEALEQALATQS. A helical transmembrane segment spans residues 1541–1561; it reads IFQLGFLMVLPMVMEIGLEHG. At 1562-1564 the chain is on the cytoplasmic side; sequence FRS. The chain crosses the membrane as a helical span at residues 1565-1585; it reads AIVDFFIMQLQLASVFFTFQL. The Extracellular segment spans residues 1586 to 1628; the sequence is GTKSHYYGRTILHGGSKYRPTGRGFVVFHAKFAENYRLYSRSH. The helical transmembrane segment at 1629–1649 threads the bilayer; that stretch reads FVKGLELLLLLVVYQIYGHSY. The Cytoplasmic segment spans residues 1650–1655; that stretch reads RSSNLY. The helical transmembrane segment at 1656-1676 threads the bilayer; it reads LYITVSMWFMVGSWLFAPFIF. Topologically, residues 1677 to 1730 are extracellular; it reads NPSGFEWQKTVDDWTDWKRWLGDRGGIGIPVEKSWESWWNVEQEHLKHTSIRGR. Residues 1731–1751 form a helical membrane-spanning segment; sequence ILEITLALRFFIYQYGIVYQL. At 1752–1759 the chain is on the cytoplasmic side; that stretch reads NISQRSKS. A helical membrane pass occupies residues 1760–1780; that stretch reads FLVYGLSWVVLLTSLLVLKMV. Topologically, residues 1781-1796 are extracellular; the sequence is SMGRRRFGTDFQLMFR. The helical transmembrane segment at 1797–1817 threads the bilayer; it reads ILKALLFLGFLSVMTILFVVF. Topologically, residues 1818–1823 are cytoplasmic; that stretch reads KLTLTD. The chain crosses the membrane as a helical span at residues 1824 to 1844; the sequence is LSASVLAFLPTGWAILLIGQV. Residues 1845–1867 lie on the Extracellular side of the membrane; the sequence is LRSPIKALGVWDSVKELGRAYEN. The helical transmembrane segment at 1868–1888 threads the bilayer; it reads IMGLVIFAPIAVLSWFPIVSE. Residues 1889 to 1921 are Cytoplasmic-facing; that stretch reads FQARLLFNQAFSRGLQISMILAGRKDKATSSHK.

This sequence belongs to the glycosyltransferase 48 family.

Its subcellular location is the cell membrane. The enzyme catalyses [(1-&gt;3)-beta-D-glucosyl](n) + UDP-alpha-D-glucose = [(1-&gt;3)-beta-D-glucosyl](n+1) + UDP + H(+). Its function is as follows. Probably involved in callose synthesis, but not required for callose formation after wounding or pathogen attack. During plant growth and development, callose is found as a transitory component of the cell plate in dividing cells, is a major component of pollen mother cell walls and pollen tubes, and is found as a structural component of plasmodesmatal canals. This is Putative callose synthase 6 (CALS6) from Arabidopsis thaliana (Mouse-ear cress).